The chain runs to 271 residues: 4-hydroxy-tetrahydrodipicolinate reductase (271 aa).

NAD(+) is bound at residue 10–15; the sequence is GAAGRM. Arginine 37 contributes to the NADP(+) binding site. NAD(+)-binding positions include 100 to 102 and 124 to 127; these read GTT and SGNM. The active-site Proton donor/acceptor is the histidine 157. Histidine 158 serves as a coordination point for (S)-2,3,4,5-tetrahydrodipicolinate. Residue lysine 161 is the Proton donor of the active site. 167–168 is a binding site for (S)-2,3,4,5-tetrahydrodipicolinate; sequence GT. The tract at residues 183-202 is disordered; it reads SLSEHEQRGRDGHTGPRKDG. The span at 185–202 shows a compositional bias: basic and acidic residues; sequence SEHEQRGRDGHTGPRKDG.

It belongs to the DapB family.

The protein resides in the cytoplasm. The enzyme catalyses (S)-2,3,4,5-tetrahydrodipicolinate + NAD(+) + H2O = (2S,4S)-4-hydroxy-2,3,4,5-tetrahydrodipicolinate + NADH + H(+). It catalyses the reaction (S)-2,3,4,5-tetrahydrodipicolinate + NADP(+) + H2O = (2S,4S)-4-hydroxy-2,3,4,5-tetrahydrodipicolinate + NADPH + H(+). It participates in amino-acid biosynthesis; L-lysine biosynthesis via DAP pathway; (S)-tetrahydrodipicolinate from L-aspartate: step 4/4. Catalyzes the conversion of 4-hydroxy-tetrahydrodipicolinate (HTPA) to tetrahydrodipicolinate. The chain is 4-hydroxy-tetrahydrodipicolinate reductase from Beijerinckia indica subsp. indica (strain ATCC 9039 / DSM 1715 / NCIMB 8712).